We begin with the raw amino-acid sequence, 224 residues long: CASP-like protein 3A1 (224 aa).

At methionine 1–histidine 59 the chain is on the cytoplasmic side. Residues valine 60 to alanine 80 form a helical membrane-spanning segment. The Extracellular portion of the chain corresponds to glutamine 81–glutamate 106. A helical transmembrane segment spans residues tyrosine 107–methionine 127. Over serine 128 to histidine 142 the chain is Cytoplasmic. Residues alanine 143 to alanine 163 traverse the membrane as a helical segment. Over alanine 164–aspartate 192 the chain is Extracellular. N-linked (GlcNAc...) asparagine glycosylation is present at asparagine 171. The chain crosses the membrane as a helical span at residues histidine 193 to valine 213. The Cytoplasmic portion of the chain corresponds to glutamine 214–tyrosine 224.

Belongs to the Casparian strip membrane proteins (CASP) family. Homodimer and heterodimers.

It is found in the cell membrane. In Populus trichocarpa (Western balsam poplar), this protein is CASP-like protein 3A1.